A 461-amino-acid chain; its full sequence is Glycine--tRNA ligase (461 aa).

The substrate site is built by R100 and E163. Residues 195–197, 205–210, 282–283, and 326–329 each bind ATP; these read RNE, FRTREF, EL, and GLGR. A substrate-binding site is contributed by 210–214; that stretch reads FEQME. 322 to 326 provides a ligand contact to substrate; it reads EPAAG.

Belongs to the class-II aminoacyl-tRNA synthetase family. In terms of assembly, homodimer.

The protein resides in the cytoplasm. The enzyme catalyses tRNA(Gly) + glycine + ATP = glycyl-tRNA(Gly) + AMP + diphosphate. In terms of biological role, catalyzes the attachment of glycine to tRNA(Gly). The chain is Glycine--tRNA ligase from Corynebacterium glutamicum (strain ATCC 13032 / DSM 20300 / JCM 1318 / BCRC 11384 / CCUG 27702 / LMG 3730 / NBRC 12168 / NCIMB 10025 / NRRL B-2784 / 534).